A 251-amino-acid chain; its full sequence is MQTVNKQAIAQAFGRAAQSYNQHAGLQRLCGEELASYATRRQGQKVLDAGCGPGWFSQHWRAAGNHVTALDLSAEMLVQAQALHTADCYQPGDIEALPFSDASFDLCWSNLAVQWCSDLSLALTELYRVTSPGGQVLFSTLSADSLHELSAAWQPLDLPAPVNRFLPFDAIAHAGQHLPLTLMQQTLTVGFPDVLSALRSLKGIGATHLHQGRHGGLLSRRHLQQLEQHWPRDRRGYLLSYHLVYGVMHRE.

It belongs to the methyltransferase superfamily.

It carries out the reaction malonyl-[ACP] + S-adenosyl-L-methionine = malonyl-[ACP] methyl ester + S-adenosyl-L-homocysteine. It participates in cofactor biosynthesis; biotin biosynthesis. Its function is as follows. Converts the free carboxyl group of a malonyl-thioester to its methyl ester by transfer of a methyl group from S-adenosyl-L-methionine (SAM). It allows to synthesize pimeloyl-ACP via the fatty acid synthetic pathway. The sequence is that of Malonyl-[acyl-carrier protein] O-methyltransferase from Erwinia billingiae (strain Eb661).